The following is a 280-amino-acid chain: Undecaprenyl-diphosphatase (280 aa).

Transmembrane regions (helical) follow at residues 3–23 (IILLIQAVIMGIVEGITEFLP), 45–65 (VDLFVVVVQFGAILAVIYDYW), 88–108 (QLGLSLIVATIPVMIVGFTFA), 115–135 (LFDPIVVAIMLIIGGLLIFYV), 150–170 (VGLKTALMIGLFQCLALIPGT), 191–211 (AEFSFFLGIPVIVGAALLDLL), 225–245 (VLGIGTVVSFIVALLCIRLLV), and 255–275 (IFAWLRIITGVLVLIAAWGFG).

This sequence belongs to the UppP family.

The protein resides in the cell inner membrane. It catalyses the reaction di-trans,octa-cis-undecaprenyl diphosphate + H2O = di-trans,octa-cis-undecaprenyl phosphate + phosphate + H(+). Catalyzes the dephosphorylation of undecaprenyl diphosphate (UPP). Confers resistance to bacitracin. This Psychrobacter arcticus (strain DSM 17307 / VKM B-2377 / 273-4) protein is Undecaprenyl-diphosphatase.